A 536-amino-acid polypeptide reads, in one-letter code: Putative ATP-dependent RNA helicase L364 (536 aa).

Residues 47–214 (ISILLKYFLV…IPFYLMNFIP (168 aa)) enclose the Helicase ATP-binding domain. Position 60 to 67 (60 to 67 (SDTGVGKT)) interacts with ATP. Residues 160–163 (DESH) carry the DEAH box motif. Residues 288 to 334 (LSDDSDKIAEAYEEIAELMRELEEKKTQCKNHLAKIQKLKQEIELRK) adopt a coiled-coil conformation. One can recognise a Helicase C-terminal domain in the interval 338 to 486 (FIEQTQLYLE…ISAINDGDLE (149 aa)). The segment at 502–536 (VLNEPVNNPIEEPVNDPVKDPVEDLTDNQPNIVEV) is disordered.

Belongs to the DEAD box helicase family. DEAH subfamily.

The catalysed reaction is ATP + H2O = ADP + phosphate + H(+). This Acanthamoeba polyphaga (Amoeba) protein is Putative ATP-dependent RNA helicase L364.